The following is a 334-amino-acid chain: Glyceraldehyde-3-phosphate dehydrogenase (334 aa).

NAD(+) is bound by residues 12 to 13 and glycine 111; that span reads TI. Residue 140-142 coordinates D-glyceraldehyde 3-phosphate; the sequence is SCN. The active-site Nucleophile is cysteine 141. Arginine 167 serves as a coordination point for NAD(+). 192-193 lines the D-glyceraldehyde 3-phosphate pocket; the sequence is HG. Residue glutamine 298 participates in NAD(+) binding.

Belongs to the glyceraldehyde-3-phosphate dehydrogenase family. Homotetramer.

It localises to the cytoplasm. The enzyme catalyses D-glyceraldehyde 3-phosphate + phosphate + NADP(+) = (2R)-3-phospho-glyceroyl phosphate + NADPH + H(+). The catalysed reaction is D-glyceraldehyde 3-phosphate + phosphate + NAD(+) = (2R)-3-phospho-glyceroyl phosphate + NADH + H(+). It functions in the pathway carbohydrate degradation; glycolysis; pyruvate from D-glyceraldehyde 3-phosphate: step 1/5. The polypeptide is Glyceraldehyde-3-phosphate dehydrogenase (Thermococcus kodakarensis (strain ATCC BAA-918 / JCM 12380 / KOD1) (Pyrococcus kodakaraensis (strain KOD1))).